We begin with the raw amino-acid sequence, 122 residues long: Large ribosomal subunit protein uL18 (122 aa).

Belongs to the universal ribosomal protein uL18 family. As to quaternary structure, part of the 50S ribosomal subunit; part of the 5S rRNA/L5/L18/L25 subcomplex. Contacts the 5S and 23S rRNAs.

Its function is as follows. This is one of the proteins that bind and probably mediate the attachment of the 5S RNA into the large ribosomal subunit, where it forms part of the central protuberance. This Geobacter sp. (strain M21) protein is Large ribosomal subunit protein uL18.